Here is a 202-residue protein sequence, read N- to C-terminus: Guanylate kinase (202 aa).

The region spanning 18–200 is the Guanylate kinase-like domain; the sequence is LKPVVVFGPS…AYKQLEAICL (183 aa). Residue 25 to 32 coordinates ATP; sequence GPSGVGKS.

The protein belongs to the guanylate kinase family.

The catalysed reaction is GMP + ATP = GDP + ADP. Functionally, essential for recycling GMP and indirectly, cGMP. The sequence is that of Guanylate kinase from Schizosaccharomyces pombe (strain 972 / ATCC 24843) (Fission yeast).